The following is a 215-amino-acid chain: 3-dehydroquinate dehydratase (215 aa).

3-dehydroquinate contacts are provided by residues 27 to 29 (EVR) and arginine 54. Residue histidine 112 is the Proton donor/acceptor of the active site. Lysine 139 acts as the Schiff-base intermediate with substrate in catalysis. 3-dehydroquinate-binding residues include arginine 176 and glutamine 198.

This sequence belongs to the type-I 3-dehydroquinase family. In terms of assembly, homodimer.

It catalyses the reaction 3-dehydroquinate = 3-dehydroshikimate + H2O. The protein operates within metabolic intermediate biosynthesis; chorismate biosynthesis; chorismate from D-erythrose 4-phosphate and phosphoenolpyruvate: step 3/7. Its function is as follows. Involved in the third step of the chorismate pathway, which leads to the biosynthesis of aromatic amino acids. Catalyzes the cis-dehydration of 3-dehydroquinate (DHQ) and introduces the first double bond of the aromatic ring to yield 3-dehydroshikimate. In Thermococcus onnurineus (strain NA1), this protein is 3-dehydroquinate dehydratase.